Here is a 236-residue protein sequence, read N- to C-terminus: Spore wall protein 12 (236 aa).

Residues 169–188 form a disordered region; that stretch reads KKSKEPKTPSMVSRENDMER.

It belongs to the SWP12 family.

The protein resides in the spore wall. In Encephalitozoon cuniculi (strain GB-M1) (Microsporidian parasite), this protein is Spore wall protein 12 (SWP12).